A 150-amino-acid polypeptide reads, in one-letter code: Large ribosomal subunit protein uL15 (150 aa).

Residues 12 to 43 (AKKRKKRVGCGESSGHGKTSGRGHKGQKARAG) form a disordered region. Positions 30–39 (TSGRGHKGQK) are enriched in basic residues.

This sequence belongs to the universal ribosomal protein uL15 family. As to quaternary structure, part of the 50S ribosomal subunit.

Its function is as follows. Binds to the 23S rRNA. This is Large ribosomal subunit protein uL15 from Methylacidiphilum infernorum (isolate V4) (Methylokorus infernorum (strain V4)).